The chain runs to 830 residues: Cyclin-dependent kinase inhibitor FAR1 (830 aa).

The tract at residues 1–31 (MKTPTRVSFEKKIHTPPSGDRDAERSPPKKF) is disordered. The segment covering 8-27 (SFEKKIHTPPSGDRDAERSP) has biased composition (basic and acidic residues). At Ser87 the chain carries Phosphoserine; by CDC28. Phosphoserine occurs at positions 110 and 114. An RING-type zinc finger spans residues 202–252 (CLICEESISSTFTGEKVVESTCSHTSHYNCYLMLFETLYFQGKFPECKICG). Thr306 is subject to Phosphothreonine.

In terms of assembly, associates with the CDC28-CLN complex. Thought to be phosphorylated by MAP kinase FUS3. Thought to enhance the binding of FAR1 to G1-specific cyclin-dependent kinase (CDK) complexes.

Inhibitor of the cyclin-dependent kinase CDC28. Necessary for cell cycle arrest. Involved in pheromone response. Contributes to mating efficiency. Required for oriented polarization of yeast cells in response to mating pheromones. This is Cyclin-dependent kinase inhibitor FAR1 (FAR1) from Saccharomyces cerevisiae (strain ATCC 204508 / S288c) (Baker's yeast).